The primary structure comprises 350 residues: Twinfilin-1 (350 aa).

Ser2 carries the N-acetylserine modification. The ADF-H 1 domain occupies Ser2–Leu139. 2 positions are modified to phosphoserine: Ser143 and Ser277. In terms of domain architecture, ADF-H 2 spans Leu175–His313. Tyr309 carries the phosphotyrosine modification. The segment at Gln316–Asp350 is disordered. Thr349 carries the post-translational modification Phosphothreonine.

The protein belongs to the actin-binding proteins ADF family. Twinfilin subfamily. In terms of assembly, interacts with G-actin; ADP-actin form and capping protein (CP). May also be able to interact with TWF2 and phosphoinositides, PI(4,5)P2. When bound to PI(4,5)P2, it is down-regulated. Interacts with ACTG1. In terms of processing, phosphorylated on serine and threonine residues.

The protein localises to the cytoplasm. The protein resides in the cytoskeleton. Its function is as follows. Actin-binding protein involved in motile and morphological processes. Inhibits actin polymerization, likely by sequestering G-actin. By capping the barbed ends of filaments, it also regulates motility. Seems to play an important role in clathrin-mediated endocytosis and distribution of endocytic organelles. In Rattus norvegicus (Rat), this protein is Twinfilin-1 (Twf1).